A 363-amino-acid polypeptide reads, in one-letter code: Protein-arginine kinase (363 aa).

The region spanning 24–255 (IVLSSRIRLA…QQLIAQERAA (232 aa)) is the Phosphagen kinase C-terminal domain. Residues 27–31 (SSRIR), His-92, Arg-126, 177–181 (RASVM), and 208–213 (RGTYGE) contribute to the ATP site. Positions 338-343 (RDVRRA) match the RDXXRA motif of the pArg binding pocket involved in allosteric regulation motif.

Belongs to the ATP:guanido phosphotransferase family.

It catalyses the reaction L-arginyl-[protein] + ATP = N(omega)-phospho-L-arginyl-[protein] + ADP + H(+). With respect to regulation, appears to be allosterically activated by the binding of pArg-containing polypeptides to the pArg-binding pocket localized in the C-terminal domain of McsB. Functionally, catalyzes the specific phosphorylation of arginine residues in a large number of proteins. Is part of the bacterial stress response system. Protein arginine phosphorylation has a physiologically important role and is involved in the regulation of many critical cellular processes, such as protein homeostasis, motility, competence, and stringent and stress responses, by regulating gene expression and protein activity. The sequence is that of Protein-arginine kinase from Geobacillus thermodenitrificans (strain NG80-2).